The following is a 385-amino-acid chain: Urotensin-2 receptor (385 aa).

Over 1-53 the chain is Extracellular; sequence MALSLESTSFPMLAVSRSTASELPGGFNVSHNSSWTGPTDPSSLQDLVATGVI. Residues Asn28 and Asn32 are each glycosylated (N-linked (GlcNAc...) asparagine). Residues 54–76 traverse the membrane as a helical segment; that stretch reads GAVLSTMGVVGVVGNVYTLVVMC. Topologically, residues 77-86 are cytoplasmic; the sequence is RFLRASASMY. The helical transmembrane segment at 87-112 threads the bilayer; that stretch reads VYVVNLALADLLYLLSIPFIVATYVT. Residues 113-123 are Extracellular-facing; that stretch reads KDWHFGDVGCR. Cys122 and Cys198 are disulfide-bonded. Residues 124-145 form a helical membrane-spanning segment; the sequence is VLFSLDFLTMHASIFTLTIMSS. Residues 146–166 are Cytoplasmic-facing; the sequence is ERYAAVLRPLDTVQRSKGYRK. The chain crosses the membrane as a helical span at residues 167-185; the sequence is LLALGTWLLALLLTLPMML. Over 186–208 the chain is Extracellular; that stretch reads AIRLVRRGSKSLCLPAWGPRAHR. A helical membrane pass occupies residues 209–231; sequence TYLTLLFGTSIVGPGLVIGLLYI. Residues 232–257 are Cytoplasmic-facing; that stretch reads RLARAYWLSQQASFKQTRRLPNPRVL. A helical transmembrane segment spans residues 258-283; it reads YLILGIVLLFWACFLPFWLWQLLAQY. Topologically, residues 284–298 are extracellular; it reads HQAMPLTPETARIIN. The chain crosses the membrane as a helical span at residues 299–320; the sequence is YLTACLTYGNSCINPFLYTLLT. Residues 321-385 lie on the Cytoplasmic side of the membrane; the sequence is KNYREYLRGR…SPVPPNGAFV (65 aa).

It belongs to the G-protein coupled receptor 1 family.

It localises to the cell membrane. Functionally, high affinity receptor for urotensin-2 and urotensin-2B. The activity of this receptor is mediated by a G-protein that activate a phosphatidylinositol-calcium second messenger system. The polypeptide is Urotensin-2 receptor (Uts2r) (Mus musculus (Mouse)).